A 79-amino-acid polypeptide reads, in one-letter code: M-myrmicitoxin(01)-Tb1a (79 aa).

A signal peptide spans 1-26 (MKLSFLSLVLAIILVMALMYTPHAEA). Positions 27–56 (KAWADADADATAAADADADAVADALADAVA) are excised as a propeptide. Valine amide is present on Val-76.

It belongs to the formicidae venom precursor-01 superfamily. Post-translationally, the C-terminal amidation is important for antimicrobial activity, since a non-amidated synthetic peptide shows a reduced antimicrobial activity (2-20-fold depending on the strain tested). The amidation may play a positive role in the peptide conformation, since amidated peptide shows an increase of about 5% of helical content. In terms of tissue distribution, expressed by the venom gland.

The protein localises to the secreted. Its subcellular location is the target cell membrane. In terms of biological role, antimicrobial peptide that shows antimicrobial activities against all microorganisms tested with minimal inhibitory concentrations (MICs) values ranging from 0.45 to 97.5 umol/L. This peptide kills the microorganisms by permeabilizating the membranes. It shows a very weak hemolytic activity (HC(50)=325 umol/L) and weak cytotoxicity against human lymphocytes (LC(50)=67.8 umol/L). Gram-negative bacteria tested are E.coli (MIC=24.4 umol/L), C.sakazakii (MIC=5.8 umol/L), P.aeruginosa (MIC=8.7-12.2 umol/L), S.enterica (MIC=5.4 umol/L), and H.pylori (MIC=0.99-3.9 umol/L). Gram-positive bacteria tested are E.hirae (MIC=12.2 umol/L), S.aureus (MIC=3.0-6.4 umol/L), methicillin-resistant S.aureus (MRSA) (MIC=8.7 umol/L), S.xylosus (MIC=0.45-1.3 umol/L), and B.subtilis (MIC=24.4 umol/L). Fungi tested are A.niger (MIC=0.75 umol/L), C.albicans (MIC=17.3 umol/L), G.candidum (MIC=97.5 umol/L), and S.cerevisiae (MIC=6.1 umol/L). Finally the parasite tested is L.infantum (MIC=1.5 umol/L). The sequence is that of M-myrmicitoxin(01)-Tb1a from Tetramorium bicarinatum (Tramp ant).